We begin with the raw amino-acid sequence, 240 residues long: Mannosyl-D-glycerate transport/metabolism system repressor MngR (240 aa).

Residues 4–72 enclose the HTH gntR-type domain; it reads KPLYRQIADR…QGSGTYVKEE (69 aa). Residues 32–51 constitute a DNA-binding region (H-T-H motif); the sequence is ESALQTEFGVSRVTVRQALR.

Represses mngA and mngB. Regulates its own expression. The chain is Mannosyl-D-glycerate transport/metabolism system repressor MngR (mngR) from Escherichia coli (strain K12).